Reading from the N-terminus, the 873-residue chain is Sine oculis-binding protein homolog (873 aa).

Residues Met-1–Lys-14 show a composition bias toward basic and acidic residues. Residues Met-1–Glu-26 form a disordered region. FCS-type zinc fingers lie at residues Asp-142–Ala-180 and Phe-216–Asn-256. Disordered stretches follow at residues Arg-308–Asn-339, Arg-413–Pro-484, and Lys-550–Leu-646. Positions Ala-318–Asn-339 are enriched in polar residues. Over residues His-417–Gly-433 the composition is skewed to low complexity. Pro residues predominate over residues Ile-460 to Pro-484. Positions Glu-614–Arg-625 are enriched in basic and acidic residues. The SUMO interaction motif 1 (SIM); mediates the binding to polysumoylated substrates motif lies at Val-620 to Thr-624. Position 629 is a phosphoserine (Ser-629). Positions Val-653–Thr-657 match the SUMO interaction motif 2 (SIM); mediates the binding to polysumoylated substrates motif. A Glycyl lysine isopeptide (Lys-Gly) (interchain with G-Cter in SUMO2) cross-link involves residue Lys-677. Ser-699 is subject to Phosphoserine. The segment at Ala-730–Val-771 is disordered. Pro residues predominate over residues Glu-739–Pro-754.

The protein belongs to the SOBP family. As to quaternary structure, interacts (via SIM domains) with SUMO1 and SUMO2.

Functionally, implicated in development of the cochlea. The chain is Sine oculis-binding protein homolog from Homo sapiens (Human).